We begin with the raw amino-acid sequence, 250 residues long: MSDLSGKTIIVTGGGSGIGRATVELLVASGANVAVADINDEAGEAVVAASGGKAAYFRCDIAQEEDVKALVAQTLAAFGGLDGAFNNAAIPQAGLPLAEVSLERFRQSMDINVTGTFLCMKYQILAMIERGTKGSIVNTASVAGVVGVPMHGEYVGAKHAVVGLTRVAAADYGKHGIRVNALVPGAVRTPMLQRAMDNDAGLEPYLNSIHPIGRFSEPHEQAQAAVWLLSDAASFVTGSCLAADGGFTAI.

9–34 (IIVTGGGSGIGRATVELLVASGANVA) contacts NAD(+). Residue S141 coordinates substrate. Residue Y154 is the Proton acceptor of the active site.

The protein belongs to the short-chain dehydrogenases/reductases (SDR) family.

It catalyses the reaction 2,5-dichlorocyclohexa-2,5-dien-1,4-diol + NAD(+) = 2,5-dichlorohydroquinone + NADH + H(+). The protein operates within xenobiotic degradation; gamma-hexachlorocyclohexane degradation. In terms of biological role, catalyzes the dehydrogenation of 2,5-dichloro-2,5-cyclohexadiene-1,4-diol (2,5-DDOL) to 2,5-dichlorohydroquinone (2,5-DCHQ), a step in the degradation of gamma-hexachlorocyclohexane (gamma-HCH or lindane). The chain is 2,5-dichloro-2,5-cyclohexadiene-1,4-diol dehydrogenase from Sphingobium indicum (strain DSM 16412 / CCM 7286 / MTCC 6364 / B90A).